Reading from the N-terminus, the 185-residue chain is Meiotic recombination protein REC104 (185 aa).

A disordered region spans residues 146–168; that stretch reads ANETRPLSSSSTPQILQSDYSVV.

Potential transcriptional regulator that is required to activate expression of a number of early meiotic genes including HOP1. This Saccharomyces pastorianus (Lager yeast) protein is Meiotic recombination protein REC104 (REC104).